A 287-amino-acid chain; its full sequence is Thiazole synthase (287 aa).

K111 (schiff-base intermediate with DXP) is an active-site residue. Residues G172, 203-204 (AG), and 225-226 (NT) each bind 1-deoxy-D-xylulose 5-phosphate. The segment at 268–287 (PQEGVISTRPYGSQADEIGS) is disordered.

This sequence belongs to the ThiG family. In terms of assembly, homotetramer. Forms heterodimers with either ThiH or ThiS.

Its subcellular location is the cytoplasm. It catalyses the reaction [ThiS sulfur-carrier protein]-C-terminal-Gly-aminoethanethioate + 2-iminoacetate + 1-deoxy-D-xylulose 5-phosphate = [ThiS sulfur-carrier protein]-C-terminal Gly-Gly + 2-[(2R,5Z)-2-carboxy-4-methylthiazol-5(2H)-ylidene]ethyl phosphate + 2 H2O + H(+). It functions in the pathway cofactor biosynthesis; thiamine diphosphate biosynthesis. Catalyzes the rearrangement of 1-deoxy-D-xylulose 5-phosphate (DXP) to produce the thiazole phosphate moiety of thiamine. Sulfur is provided by the thiocarboxylate moiety of the carrier protein ThiS. In vitro, sulfur can be provided by H(2)S. This Rhodopirellula baltica (strain DSM 10527 / NCIMB 13988 / SH1) protein is Thiazole synthase.